The following is a 70-amino-acid chain: Large ribosomal subunit protein eL38 (70 aa).

It belongs to the eukaryotic ribosomal protein eL38 family.

The sequence is that of Large ribosomal subunit protein eL38 (RPL38) from Branchiostoma belcheri (Amphioxus).